The primary structure comprises 509 residues: Steroid 17-alpha-hydroxylase/17,20 lyase (509 aa).

A substrate-binding site is contributed by Asn202. Cys442 lines the heme pocket.

This sequence belongs to the cytochrome P450 family. It depends on heme as a cofactor.

The protein resides in the endoplasmic reticulum membrane. The protein localises to the microsome membrane. It carries out the reaction a C21-steroid + reduced [NADPH--hemoprotein reductase] + O2 = a 17alpha-hydroxy-C21-steroid + oxidized [NADPH--hemoprotein reductase] + H2O + H(+). The enzyme catalyses progesterone + reduced [NADPH--hemoprotein reductase] + O2 = 17alpha-hydroxyprogesterone + oxidized [NADPH--hemoprotein reductase] + H2O + H(+). The catalysed reaction is pregnenolone + reduced [NADPH--hemoprotein reductase] + O2 = 17alpha-hydroxypregnenolone + oxidized [NADPH--hemoprotein reductase] + H2O + H(+). It catalyses the reaction 17alpha-hydroxyprogesterone + reduced [NADPH--hemoprotein reductase] + O2 = androst-4-ene-3,17-dione + acetate + oxidized [NADPH--hemoprotein reductase] + H2O + 2 H(+). It carries out the reaction 17alpha-hydroxyprogesterone + reduced [NADPH--hemoprotein reductase] + O2 = 16alpha,17alpha-dihydroxyprogesterone + oxidized [NADPH--hemoprotein reductase] + H2O + H(+). The enzyme catalyses 16alpha,17alpha-dihydroxyprogesterone + reduced [NADPH--hemoprotein reductase] + O2 = 6beta,16alpha,17alpha-trihydroxyprogesterone + oxidized [NADPH--hemoprotein reductase] + H2O + H(+). The catalysed reaction is 17alpha-hydroxypregnenolone + reduced [NADPH--hemoprotein reductase] + O2 = 3beta-hydroxyandrost-5-en-17-one + acetate + oxidized [NADPH--hemoprotein reductase] + H2O + 2 H(+). It catalyses the reaction 16alpha,17alpha-dihydroxypregnenolone + reduced [NADPH--hemoprotein reductase] + O2 = 3beta,16alpha-dihydroxy-androst-5-en-17-one + acetate + oxidized [NADPH--hemoprotein reductase] + H2O + 2 H(+). It carries out the reaction 3beta-hydroxyandrost-5-en-17-one + reduced [NADPH--hemoprotein reductase] + O2 = 3beta,16alpha-dihydroxy-androst-5-en-17-one + oxidized [NADPH--hemoprotein reductase] + H2O + H(+). The enzyme catalyses androst-4-ene-3,17-dione + reduced [NADPH--hemoprotein reductase] + O2 = 16alpha-hydroxyandrost-4-ene-3,17-dione + oxidized [NADPH--hemoprotein reductase] + H2O + H(+). It participates in steroid hormone biosynthesis. Its pathway is steroid biosynthesis; glucocorticoid biosynthesis. Regulated predominantly by intracellular cAMP levels. The 17,20-lyase activity is stimulated by cytochrome b5, which acts as an allosteric effector increasing the Vmax of the lyase activity. Functionally, a cytochrome P450 monooxygenase involved in corticoid and androgen biosynthesis. Catalyzes 17-alpha hydroxylation of C21 steroids, which is common for both pathways. A second oxidative step, required only for androgen synthesis, involves an acyl-carbon cleavage. The 17-alpha hydroxy intermediates, as part of adrenal glucocorticoids biosynthesis pathway, are precursors of cortisol. Hydroxylates steroid hormones, pregnenolone and progesterone to form 17-alpha hydroxy metabolites, followed by the cleavage of the C17-C20 bond to form C19 steroids, dehydroepiandrosterone (DHEA) and androstenedione. Has 16-alpha hydroxylase activity. Catalyzes 16-alpha hydroxylation of 17-alpha hydroxy pregnenolone, followed by the cleavage of the C17-C20 bond to form 16-alpha-hydroxy DHEA. Also 16-alpha hydroxylates androgens, relevant for estriol synthesis. Mechanistically, uses molecular oxygen inserting one oxygen atom into a substrate, and reducing the second into a water molecule, with two electrons provided by NADPH via cytochrome P450 reductase (CPR; NADPH-ferrihemoprotein reductase). This Ovis aries (Sheep) protein is Steroid 17-alpha-hydroxylase/17,20 lyase (CYP17A1).